Reading from the N-terminus, the 64-residue chain is Putative neurotoxin-H (64 aa).

The N-terminal stretch at Met1 to Cys19 is a signal peptide. 3 disulfide bridges follow: Cys25–Cys45, Cys32–Cys54, and Cys36–Cys56.

In terms of tissue distribution, expressed by the venom gland.

The protein localises to the secreted. This Lychas mucronatus (Chinese swimming scorpion) protein is Putative neurotoxin-H.